A 267-amino-acid polypeptide reads, in one-letter code: MPRIAIIGGSGVYDPALLTNIREETVETPYGTVKVKIGEYNGEEIVFLARHGEGHSVPPHKINYRANIWALYELGVERILSTSAVGSLNLDMKPGDFVILDQLMDFTKTRHYTFYDGEESPHDRKFVAHVDFTEPYCPELRKALMNAARELGFTYHPMGTYACMEGPRFETRAEIRALKILGADVVGMTQCPEAALARELEMCYASVAIVTNYAAGISPNKLTHTEVVELMAQKSNEIKLLLMKAIEYIPKERRCPCKDALKGATGE.

Phosphate contacts are provided by residues Ser-10, 50 to 51 (RH), and 83 to 84 (SA). Position 188 (Met-188) interacts with substrate. Thr-189 serves as a coordination point for phosphate. Substrate is bound at residue 212–214 (NYA).

The protein belongs to the PNP/MTAP phosphorylase family. MTAP subfamily. In terms of assembly, homohexamer. Dimer of a homotrimer.

It catalyses the reaction a purine D-ribonucleoside + phosphate = a purine nucleobase + alpha-D-ribose 1-phosphate. The enzyme catalyses guanosine + phosphate = alpha-D-ribose 1-phosphate + guanine. It carries out the reaction inosine + phosphate = alpha-D-ribose 1-phosphate + hypoxanthine. It functions in the pathway purine metabolism; purine nucleoside salvage. In terms of biological role, purine nucleoside phosphorylase which is highly specific for 6-oxopurine nucleosides. Cleaves guanosine or inosine to respective bases and sugar-1-phosphate molecules. Involved in purine salvage. This chain is Probable 6-oxopurine nucleoside phosphorylase, found in Thermococcus kodakarensis (strain ATCC BAA-918 / JCM 12380 / KOD1) (Pyrococcus kodakaraensis (strain KOD1)).